A 576-amino-acid chain; its full sequence is Low-affinity glucose transporter HXT4 (576 aa).

A disordered region spans residues 1–56 (MSEEAAYQEDTAVQNTPADALSPVESDSNSALSTPSNKAERDDMKDFDENHEESNN). At 1 to 66 (MSEEAAYQED…YVEIPKKPAS (66 aa)) the chain is on the cytoplasmic side. Over residues 25–37 (ESDSNSALSTPSN) the composition is skewed to polar residues. Basic and acidic residues predominate over residues 38 to 54 (KAERDDMKDFDENHEES). Lys-45 participates in a covalent cross-link: Glycyl lysine isopeptide (Lys-Gly) (interchain with G-Cter in ubiquitin). A helical membrane pass occupies residues 67–87 (AYVTVSICCLMVAFGGFVFGW). Residues 88–122 (DTGTISGFVAQTDFIRRFGMKHHDGTYYLSKVRTG) lie on the Extracellular side of the membrane. A helical transmembrane segment spans residues 123–143 (LIVSIFNIGCAIGGIILARLG). Topologically, residues 144 to 149 (DMYGRK) are cytoplasmic. The chain crosses the membrane as a helical span at residues 150 to 170 (MGLIVVVVIYIIGIIIQIASI). The Extracellular segment spans residues 171 to 180 (NKWYQYFIGR). Residues 181–201 (IISGLGVGGIAVLSPMLISEV) traverse the membrane as a helical segment. The Cytoplasmic portion of the chain corresponds to 202–207 (SPKHIR). Residues 208-228 (GTLVSCYQLMITLGIFLGYCT) traverse the membrane as a helical segment. Topologically, residues 229-242 (NYGTKTYTNSVQWR) are extracellular. A helical transmembrane segment spans residues 243–263 (VPLGLGFAWALFMIGGMTFVP). Residues 264–346 (ESPRYLVEVG…IQSLQQLTGD (83 aa)) are Cytoplasmic-facing. A helical transmembrane segment spans residues 347-363 (NYFFYYGTTVFTAVGLE). Over 364-369 (DSFETS) the chain is Extracellular. A helical transmembrane segment spans residues 370–387 (IVLGIVNFASTFVGIFLV). Residues 388–394 (ERYGRRR) are Cytoplasmic-facing. Residues 395 to 415 (CLLWGAASMTACMVVFASVGV) form a helical membrane-spanning segment. At 416–437 (TRLWPNGKKNGSSKGAGNCMIV) the chain is on the extracellular side. The N-linked (GlcNAc...) asparagine glycan is linked to Asn-425. Residues 438 to 458 (FTCFYLFCFATTWAPIPFVVN) form a helical membrane-spanning segment. The Cytoplasmic portion of the chain corresponds to 459–475 (SETFPLRVKSKCMAIAQ). Residues 476 to 496 (ACNWIWGFLIGFFTPFISGAI) traverse the membrane as a helical segment. Residue Asp-497 is a topological domain, extracellular. The chain crosses the membrane as a helical span at residues 498–518 (FYYGYVFMGCLVFSYFYVFFF). The Cytoplasmic segment spans residues 519-576 (VPETKGLTLEEVNTLWEEGVLPWKSPSWVPPNKRGTDYNADDLMHDDQPFYKKMFGKK).

It belongs to the major facilitator superfamily. Sugar transporter (TC 2.A.1.1) family.

The protein resides in the cell membrane. With respect to regulation, xylose uptake is strongly inhibited by glucose. Low-affinity glucose transporter. Can also transport xylose. In Saccharomyces cerevisiae (strain YJM789) (Baker's yeast), this protein is Low-affinity glucose transporter HXT4 (HXT4).